A 186-amino-acid polypeptide reads, in one-letter code: UPF0301 protein Swit_2673 (186 aa).

Belongs to the UPF0301 (AlgH) family.

In Rhizorhabdus wittichii (strain DSM 6014 / CCUG 31198 / JCM 15750 / NBRC 105917 / EY 4224 / RW1) (Sphingomonas wittichii), this protein is UPF0301 protein Swit_2673.